A 187-amino-acid polypeptide reads, in one-letter code: MPKINGNEIRPGNVLEHNGGLWAAVKVDHVKPGKGGAFAQVELRNLRNGSKLNERFRSADKVERVRLEQKDQQFLYESDGMLVFMDAETYEQIELPADLLGERRPFLQDGMTILVEFYESEALNATLPQKVTCKIVETEPVVKGQTAANSFKPAVLDNGVKVMVPPFVGQDEMIVVNTETMEYSERA.

The protein belongs to the elongation factor P family.

Its subcellular location is the cytoplasm. It participates in protein biosynthesis; polypeptide chain elongation. In terms of biological role, involved in peptide bond synthesis. Stimulates efficient translation and peptide-bond synthesis on native or reconstituted 70S ribosomes in vitro. Probably functions indirectly by altering the affinity of the ribosome for aminoacyl-tRNA, thus increasing their reactivity as acceptors for peptidyl transferase. The chain is Elongation factor P from Ruegeria pomeroyi (strain ATCC 700808 / DSM 15171 / DSS-3) (Silicibacter pomeroyi).